The primary structure comprises 434 residues: Maintenance of mitochondrial morphology protein 1 (434 aa).

The Lumenal segment spans residues M1–G105. Residues L106–F126 traverse the membrane as a helical segment. Over S127 to D434 the chain is Cytoplasmic. The region spanning S194 to P408 is the SMP-LTD domain. A disordered region spans residues K415–D434.

This sequence belongs to the MMM1 family. As to quaternary structure, homodimer. Component of the ER-mitochondria encounter structure (ERMES) or MDM complex, composed of MMM1, MDM10, MDM12 and MDM34. An MMM1 homodimer associates with one molecule of MDM12 on each side in a pairwise head-to-tail manner, and the SMP-LTD domains of MMM1 and MDM12 generate a continuous hydrophobic tunnel for phospholipid trafficking.

It is found in the endoplasmic reticulum membrane. Its function is as follows. Component of the ERMES/MDM complex, which serves as a molecular tether to connect the endoplasmic reticulum (ER) and mitochondria. Components of this complex are involved in the control of mitochondrial shape and protein biogenesis, and function in nonvesicular lipid trafficking between the ER and mitochondria. The MDM12-MMM1 subcomplex functions in the major beta-barrel assembly pathway that is responsible for biogenesis of all outer membrane beta-barrel proteins, and acts in a late step after the SAM complex. The MDM10-MDM12-MMM1 subcomplex further acts in the TOM40-specific pathway after the action of the MDM12-MMM1 complex. Essential for establishing and maintaining the structure of mitochondria and maintenance of mtDNA nucleoids. The sequence is that of Maintenance of mitochondrial morphology protein 1 from Kluyveromyces lactis (strain ATCC 8585 / CBS 2359 / DSM 70799 / NBRC 1267 / NRRL Y-1140 / WM37) (Yeast).